We begin with the raw amino-acid sequence, 123 residues long: Ribosome-binding factor A (123 aa).

This sequence belongs to the RbfA family. As to quaternary structure, monomer. Binds 30S ribosomal subunits, but not 50S ribosomal subunits or 70S ribosomes.

Its subcellular location is the cytoplasm. One of several proteins that assist in the late maturation steps of the functional core of the 30S ribosomal subunit. Associates with free 30S ribosomal subunits (but not with 30S subunits that are part of 70S ribosomes or polysomes). Required for efficient processing of 16S rRNA. May interact with the 5'-terminal helix region of 16S rRNA. The polypeptide is Ribosome-binding factor A (Delftia acidovorans (strain DSM 14801 / SPH-1)).